Consider the following 817-residue polypeptide: tRNA(Met) cytidine acetyltransferase TmcA (817 aa).

ATP contacts are provided by residues Q265, 289-298 (GRGKSVSVGI), and R439. Positions 469 to 664 (ELIRKMEVYL…YTAIVIKPIS (196 aa)) constitute an N-acetyltransferase domain. Residues 589–591 (IAT), 596–602 (MDLGLGS), E629, and R636 contribute to the acetyl-CoA site.

This sequence belongs to the RNA cytidine acetyltransferase family. TmcA subfamily.

It localises to the cytoplasm. The enzyme catalyses cytidine(34) in elongator tRNA(Met) + acetyl-CoA + ATP + H2O = N(4)-acetylcytidine(34) in elongator tRNA(Met) + ADP + phosphate + CoA + H(+). It catalyses the reaction a cytidine in RNA + acetyl-CoA + ATP + H2O = an N(4)-acetylcytidine in RNA + ADP + phosphate + CoA + H(+). The catalysed reaction is a cytidine in tRNA + acetyl-CoA + ATP + H2O = an N(4)-acetylcytidine in tRNA + ADP + phosphate + CoA + H(+). It carries out the reaction a cytidine in mRNA + acetyl-CoA + ATP + H2O = an N(4)-acetylcytidine in mRNA + ADP + phosphate + CoA + H(+). Catalyzes the formation of N(4)-acetylcytidine (ac(4)C) at the wobble position of tRNA(Met), by using acetyl-CoA as an acetyl donor and ATP (or GTP). Functionally, catalyzes the formation of N(4)-acetylcytidine (ac(4)C) sites in rRNA, tRNA, mRNA and non-coding (nc) RNA, almost always on the middle C of a CCG motif. In hyperthermophiles more acetylation is seen at higher temperatures. In Pyrococcus abyssi (strain GE5 / Orsay), this protein is tRNA(Met) cytidine acetyltransferase TmcA.